The sequence spans 238 residues: Ribonuclease PH (238 aa).

Phosphate is bound by residues arginine 86 and 124–126 (GTR).

It belongs to the RNase PH family. Homohexameric ring arranged as a trimer of dimers.

It carries out the reaction tRNA(n+1) + phosphate = tRNA(n) + a ribonucleoside 5'-diphosphate. Functionally, phosphorolytic 3'-5' exoribonuclease that plays an important role in tRNA 3'-end maturation. Removes nucleotide residues following the 3'-CCA terminus of tRNAs; can also add nucleotides to the ends of RNA molecules by using nucleoside diphosphates as substrates, but this may not be physiologically important. Probably plays a role in initiation of 16S rRNA degradation (leading to ribosome degradation) during starvation. This is Ribonuclease PH from Sphingopyxis alaskensis (strain DSM 13593 / LMG 18877 / RB2256) (Sphingomonas alaskensis).